Reading from the N-terminus, the 241-residue chain is Sugar fermentation stimulation protein homolog (241 aa).

The protein belongs to the SfsA family.

The chain is Sugar fermentation stimulation protein homolog from Thermosynechococcus vestitus (strain NIES-2133 / IAM M-273 / BP-1).